Consider the following 300-residue polypeptide: Uricase (300 aa).

Ala2 is modified (N-acetylalanine). An N6-acetyllysine; alternate mark is found at Lys6 and Lys19. Residues Lys6 and Lys19 each carry the N6-succinyllysine; alternate modification. Catalysis depends on Lys19, which acts as the Charge relay system. An N6-acetyllysine mark is found at Lys23 and Lys32. Phosphoserine occurs at positions 35 and 59. Catalysis depends on Thr64, which acts as the Charge relay system. Positions 64 and 65 each coordinate urate. N6-acetyllysine occurs at positions 114, 118, and 160. Phe166 provides a ligand contact to urate. Lys171 and Lys181 each carry N6-acetyllysine. Arg183 is a urate binding site. An N6-acetyllysine; alternate mark is found at Lys217 and Lys224. An N6-succinyllysine; alternate mark is found at Lys217 and Lys224. Position 228 is a phosphoserine (Ser228). Val231, Gln232, and Asn258 together coordinate urate. His260 (charge relay system) is an active-site residue. Position 274 is an N6-acetyllysine (Lys274). Tyr285 carries the phosphotyrosine modification. Positions Ser298 to Leu300 match the Microbody targeting signal motif.

This sequence belongs to the uricase family.

Its subcellular location is the peroxisome. The enzyme catalyses urate + O2 + H2O = 5-hydroxyisourate + H2O2. Its pathway is purine metabolism; urate degradation; (S)-allantoin from urate: step 1/3. Functionally, catalyzes the oxidation of uric acid to 5-hydroxyisourate, which is further processed to form (S)-allantoin. This is Uricase (UOX) from Oryctolagus cuniculus (Rabbit).